Here is a 67-residue protein sequence, read N- to C-terminus: MSVEEKLNQAKGSIKEGVGKAIGDEKMEKEGAAEKVVSKVKEVAEDAKDAVEGAVEGVKNMLSGDDK.

A disordered region spans residues 1–30 (MSVEEKLNQAKGSIKEGVGKAIGDEKMEKE).

This sequence belongs to the UPF0337 (CsbD) family.

This is UPF0337 protein SP_1805 from Streptococcus pneumoniae serotype 4 (strain ATCC BAA-334 / TIGR4).